The following is a 141-amino-acid chain: Auxin-responsive protein SAUR62 (141 aa).

Belongs to the ARG7 family. In terms of tissue distribution, expressed in stamen filaments and petals.

Its subcellular location is the cell membrane. May promote auxin-stimulated organ elongation, such as hypocotyls, stamen filaments and petals. The polypeptide is Auxin-responsive protein SAUR62 (Arabidopsis thaliana (Mouse-ear cress)).